Consider the following 317-residue polypeptide: Probable cell division protein WhiA (317 aa).

Positions 275–308 form a DNA-binding region, H-T-H motif; sequence SLKELGEMLVPKVGKSGVNHRMRKIDELAEKLEE.

This sequence belongs to the WhiA family.

Functionally, involved in cell division and chromosome segregation. The polypeptide is Probable cell division protein WhiA (Desulfitobacterium hafniense (strain DSM 10664 / DCB-2)).